Consider the following 367-residue polypeptide: Heme A synthase (367 aa).

5 consecutive transmembrane segments (helical) span residues 26 to 46 (IRGW…VGGA), 111 to 131 (LLAR…WVTG), 139 to 159 (LPLL…WWMV), 174 to 194 (LATH…IYRG), and 212 to 232 (AGAI…VAGL). Histidine 274 serves as a coordination point for heme. 3 helical membrane passes run 276-296 (LGAY…LRAA), 305-325 (SVLL…TLLL), and 327-347 (VPIG…GFAI). Histidine 335 is a heme binding site.

It belongs to the COX15/CtaA family. Type 2 subfamily. Interacts with CtaB. The cofactor is heme b.

The protein localises to the cell membrane. It catalyses the reaction Fe(II)-heme o + 2 A + H2O = Fe(II)-heme a + 2 AH2. It functions in the pathway porphyrin-containing compound metabolism; heme A biosynthesis; heme A from heme O: step 1/1. In terms of biological role, catalyzes the conversion of heme O to heme A by two successive hydroxylations of the methyl group at C8. The first hydroxylation forms heme I, the second hydroxylation results in an unstable dihydroxymethyl group, which spontaneously dehydrates, resulting in the formyl group of heme A. The sequence is that of Heme A synthase from Rhizobium meliloti (strain 1021) (Ensifer meliloti).